A 508-amino-acid chain; its full sequence is Sugar transport protein 12 (508 aa).

Residues 1–22 are Cytoplasmic-facing; that stretch reads MPSVGIVIGDGKKEYPGKLTLY. Helical transmembrane passes span 23 to 43, 80 to 100, 118 to 138, 141 to 161, 172 to 192, 201 to 221, 294 to 314, 317 to 337, 347 to 367, 383 to 403, 426 to 446, and 451 to 471; these read VTVT…DIGI, VSLT…SLVA, VLFC…MLIV, LLLG…LSEM, IGFQ…NFFF, LSLG…LILP, LTGI…IGFG, AALI…VVSI, FLFL…AAAI, WYAI…AWSW, ITVS…LMML, and FGLF…VYLF. The Cytoplasmic portion of the chain corresponds to 472 to 508; that stretch reads LPETRGVPIEEMNRVWRSHWYWSKFVDAEKNLTKVVI.

Belongs to the major facilitator superfamily. Sugar transporter (TC 2.A.1.1) family.

The protein resides in the membrane. Mediates an active uptake of hexoses, probably by sugar/hydrogen symport. In Arabidopsis thaliana (Mouse-ear cress), this protein is Sugar transport protein 12 (STP12).